A 330-amino-acid polypeptide reads, in one-letter code: Formylaminopyrimidine-binding protein (330 aa).

The signal sequence occupies residues 1–18; that stretch reads MKSFKIISLLLAILFLAS. A lipid anchor (N-palmitoyl cysteine) is attached at Cys-19. Residue Cys-19 is the site of S-diacylglycerol cysteine attachment. Residues 38 to 39, Tyr-90, Asn-145, Tyr-188, and Glu-192 contribute to the substrate site; that span reads DW.

It belongs to the NMT1 family. As to quaternary structure, the complex is likely composed of an ATP-binding protein (ThiZ), a transmembrane protein (ThiX) and a solute-binding protein (ThiY).

It is found in the cell membrane. The protein operates within cofactor biosynthesis; thiamine diphosphate biosynthesis. In terms of biological role, participates in a thiamine pyrimidine salvage pathway as part of the ABC transporter complex ThiXYZ involved in the import of thiamine degradation products. Binds the formylaminopyrimidine N-formyl-4-amino-5-aminomethyl-2-methylpyrimidine (FAMP). Does not bind thiamine. The sequence is that of Formylaminopyrimidine-binding protein from Halalkalibacterium halodurans (strain ATCC BAA-125 / DSM 18197 / FERM 7344 / JCM 9153 / C-125) (Bacillus halodurans).